Consider the following 239-residue polypeptide: Fatty acid metabolism regulator protein (239 aa).

An HTH gntR-type domain is found at 6-74 (QSPAGFAEEY…HGKPTKINNF (69 aa)). The segment at residues 34–53 (ERELSELIGVTRTTLREVLQ) is a DNA-binding region (H-T-H motif).

As to quaternary structure, homodimer.

The protein localises to the cytoplasm. Its function is as follows. Multifunctional regulator of fatty acid metabolism. The chain is Fatty acid metabolism regulator protein from Pectobacterium carotovorum subsp. carotovorum (strain PC1).